The sequence spans 489 residues: Probable capsid protein (489 aa).

The span at 87–101 (RMERGESSETKREQQ) shows a compositional bias: basic and acidic residues. The interval 87-111 (RMERGESSETKREQQDLGATRKRKI) is disordered. Positions 107 to 110 (RKRK) match the Nuclear localization signal motif. Residues 409–426 (CRCWICTEEGHYANECPN) form a CCHC-type zinc finger. Residues 466-489 (ETTSEEESTTDSDSSSSDDEQLSF) form a disordered region.

Belongs to the caulimoviridae capsid protein family. As to quaternary structure, interacts (via nuclear localization signal) with host importin alpha.

Its subcellular location is the virion. It is found in the host nucleus. Self assembles to form an icosahedral capsid, about 50 nm in diameter, nm, composed of 420 subunits of the viral capsid protein. The capsid encapsulates the genomic dsDNA. Following virus entry into host cell, provides nuclear import of the viral genome. Virus particles do not enter the nucleus, but dock at the nuclear membrane through the interaction with host importins. The chain is Probable capsid protein from Scrophularia californica (California bee plant).